A 438-amino-acid polypeptide reads, in one-letter code: MHLAVVGLSHRTAPVAVREKLSIPEQQVEAAIQQLKSYPHIEEVAILSTCNRLEIYCVTRATEPGVREITQFLSEHSHLPLGELRPHLFVLLHQDAVMHLMRVAAGLDSLVLGEGQILSQVKTMYKLGQQYEGVGRILNRLLKQAVTAGKRVRTETSIGTGAVSISSAAVELAQLKVIARDDRSDGNLAGQRVLILGAGKMSRLLVQHLIAKGADTIQILNRTLGRAEELAKQYGGDLQIQVGLLSGLMNAIVEADIVFTSTSATDPILDRAKLEMVLAPEQRLMLIDIAVPRNVAADVVELTSVESYNVDDLREVVAQNQESRRKLAEEAEALLEEEVDAFDNWWQSLDTVPTINCLRDKIEMIREQELEKALSRLGTEFGDKHQAVVEALTRGIVNKILHDPMVQLRSQQDIEARRRAVDALQMLFNLDPQGQLSS.

Substrate contacts are provided by residues 49–52 (TCNR), S109, 114–116 (EGQ), and Q120. The Nucleophile role is filled by C50. 197–202 (GAGKMS) lines the NADP(+) pocket.

Belongs to the glutamyl-tRNA reductase family. As to quaternary structure, homodimer.

It catalyses the reaction (S)-4-amino-5-oxopentanoate + tRNA(Glu) + NADP(+) = L-glutamyl-tRNA(Glu) + NADPH + H(+). The protein operates within porphyrin-containing compound metabolism; protoporphyrin-IX biosynthesis; 5-aminolevulinate from L-glutamyl-tRNA(Glu): step 1/2. Its pathway is porphyrin-containing compound metabolism; chlorophyll biosynthesis. In terms of biological role, catalyzes the NADPH-dependent reduction of glutamyl-tRNA(Glu) to glutamate 1-semialdehyde (GSA). The polypeptide is Glutamyl-tRNA reductase (Synechococcus elongatus (strain ATCC 33912 / PCC 7942 / FACHB-805) (Anacystis nidulans R2)).